Here is a 198-residue protein sequence, read N- to C-terminus: Recombination protein RecR (198 aa).

The segment at 59-74 (CSLCCNYTDHDPCPIC) adopts a C4-type zinc-finger fold. The Toprim domain maps to 82–175 (TLLCIVEQPR…KVTRIAHGLP (94 aa)).

The protein belongs to the RecR family.

May play a role in DNA repair. It seems to be involved in an RecBC-independent recombinational process of DNA repair. It may act with RecF and RecO. This chain is Recombination protein RecR, found in Desulfitobacterium hafniense (strain Y51).